We begin with the raw amino-acid sequence, 341 residues long: MEIPEVLETLLAGKDLSPSAMRETMRKIMSGGATPAQIGAFLIALRCKGETVEEVAAAAQVLREMATKVPVSAPHLLDTCGTGGDASKTFNISTTAAFVVAAAGGRVAKHGSRSVSGRSGSADVLEAAGINIELTPDQVKTCIETLGVGFLFAQRHHGAMKYAIGPRRELGVRTLFNLLGPLTNPAGAPNQLVGVYTDPWVEGLARVLQQLGSSHVLVVHAEDGLDEISIAAPTHVAELKNGLITNYYVRPEQFGFRRAALSELAIDTVAASLKMMRGVLDNVPGPARDIVALNAGAAIYAADLTDSLEAGIRRAEAVIADGSARAKLEALAALSRQFAAS.

Residues Gly-81, 84–85 (GD), Thr-89, 91–94 (NIST), 109–117 (KHGSRSVSG), and Ser-121 contribute to the 5-phospho-alpha-D-ribose 1-diphosphate site. Residue Gly-81 coordinates anthranilate. Ser-93 contacts Mg(2+). Residue Arg-167 coordinates anthranilate. Mg(2+)-binding residues include Asp-226 and Glu-227.

It belongs to the anthranilate phosphoribosyltransferase family. As to quaternary structure, homodimer. It depends on Mg(2+) as a cofactor.

It catalyses the reaction N-(5-phospho-beta-D-ribosyl)anthranilate + diphosphate = 5-phospho-alpha-D-ribose 1-diphosphate + anthranilate. Its pathway is amino-acid biosynthesis; L-tryptophan biosynthesis; L-tryptophan from chorismate: step 2/5. In terms of biological role, catalyzes the transfer of the phosphoribosyl group of 5-phosphorylribose-1-pyrophosphate (PRPP) to anthranilate to yield N-(5'-phosphoribosyl)-anthranilate (PRA). This Methylococcus capsulatus (strain ATCC 33009 / NCIMB 11132 / Bath) protein is Anthranilate phosphoribosyltransferase.